A 106-amino-acid chain; its full sequence is Small ribosomal subunit protein uS10 (106 aa).

Belongs to the universal ribosomal protein uS10 family. As to quaternary structure, part of the 30S ribosomal subunit.

Functionally, involved in the binding of tRNA to the ribosomes. This chain is Small ribosomal subunit protein uS10, found in Prochlorococcus marinus (strain MIT 9303).